Consider the following 237-residue polypeptide: Ubiquinone biosynthesis O-methyltransferase (237 aa).

Positions 38, 58, 79, and 124 each coordinate S-adenosyl-L-methionine.

This sequence belongs to the methyltransferase superfamily. UbiG/COQ3 family.

The catalysed reaction is a 3-demethylubiquinol + S-adenosyl-L-methionine = a ubiquinol + S-adenosyl-L-homocysteine + H(+). It carries out the reaction a 3-(all-trans-polyprenyl)benzene-1,2-diol + S-adenosyl-L-methionine = a 2-methoxy-6-(all-trans-polyprenyl)phenol + S-adenosyl-L-homocysteine + H(+). It participates in cofactor biosynthesis; ubiquinone biosynthesis. In terms of biological role, O-methyltransferase that catalyzes the 2 O-methylation steps in the ubiquinone biosynthetic pathway. The chain is Ubiquinone biosynthesis O-methyltransferase from Acinetobacter baumannii (strain SDF).